A 150-amino-acid chain; its full sequence is uncharacterized protein (150 aa).

Over residues 81–90 the composition is skewed to polar residues; that stretch reads TTKPSCSFAQ. Residues 81–125 form a disordered region; that stretch reads TTKPSCSFAQPVTPRTREGAGVRGHRRRRRGSLSLIPWKTSNDKQ.

This is an uncharacterized protein from Homo sapiens (Human).